Consider the following 429-residue polypeptide: Ribosomal RNA small subunit methyltransferase B (429 aa).

Residues 254-260, aspartate 277, aspartate 303, and aspartate 322 each bind S-adenosyl-L-methionine; that span reads CAAPGGK. Residue cysteine 375 is the Nucleophile of the active site.

The protein belongs to the class I-like SAM-binding methyltransferase superfamily. RsmB/NOP family.

The protein resides in the cytoplasm. It carries out the reaction cytidine(967) in 16S rRNA + S-adenosyl-L-methionine = 5-methylcytidine(967) in 16S rRNA + S-adenosyl-L-homocysteine + H(+). Specifically methylates the cytosine at position 967 (m5C967) of 16S rRNA. This Escherichia coli O7:K1 (strain IAI39 / ExPEC) protein is Ribosomal RNA small subunit methyltransferase B.